A 506-amino-acid polypeptide reads, in one-letter code: MKEYRVYLERARSRQQDFLYPLIFREYIYGLAYSHNFNRSIFVENGSYDNKYSLLNVKRLITRMSQQNHLIISANDSNKNPFLGYNKNFYSQIISEGFAIVVEIPFFLQLSSSLEEAEIIKSYKNVRSIHSIFPFLEDKFTYLNYVSDIRIPYPIHLEILVQILRYWVKDVPFFHLLRLFLYDFYNRNCFIPTKKSISTFSKSNPRLFLFLYNFYVCEYESIFLFLRNKSSHLRLKSFSVFFERIFFYAKREHLVEVFSKDFSYTLPFFKDPNIHYVRYQGKCILASKNVPFLMNKWKHYFIHLWQCFFDVWSQPRTININQLSEHSFQLLGYFSNVRLNRSVVRSQMLQNTFLIEIVSKKLDIIVPIIPLIRSLAKAKFCNVLGHPISKPVWADSSDFDIIERFLRICRNLSHYYNGSSKKKSLYRIKYILRLSCIKTLACKHKSTVRAFLKRSGSEELLEEFFTEEEEILSLIFPRDSFTLHRFHRNRIWYLDILFSNDLVNDE.

It belongs to the intron maturase 2 family. MatK subfamily.

It localises to the plastid. The protein localises to the chloroplast. Its function is as follows. Usually encoded in the trnK tRNA gene intron. Probably assists in splicing its own and other chloroplast group II introns. In Trifolium hybridum (Alsike clover), this protein is Maturase K.